The primary structure comprises 331 residues: Aspartate carbamoyltransferase catalytic subunit (331 aa).

2 residues coordinate carbamoyl phosphate: Arg-55 and Thr-56. Position 84 (Lys-84) interacts with L-aspartate. Residues Arg-105, His-133, and Gln-136 each contribute to the carbamoyl phosphate site. The L-aspartate site is built by Arg-166 and Arg-229. Residues Leu-268 and Pro-269 each contribute to the carbamoyl phosphate site.

The protein belongs to the aspartate/ornithine carbamoyltransferase superfamily. ATCase family. Heterododecamer (2C3:3R2) of six catalytic PyrB chains organized as two trimers (C3), and six regulatory PyrI chains organized as three dimers (R2).

The catalysed reaction is carbamoyl phosphate + L-aspartate = N-carbamoyl-L-aspartate + phosphate + H(+). It functions in the pathway pyrimidine metabolism; UMP biosynthesis via de novo pathway; (S)-dihydroorotate from bicarbonate: step 2/3. Functionally, catalyzes the condensation of carbamoyl phosphate and aspartate to form carbamoyl aspartate and inorganic phosphate, the committed step in the de novo pyrimidine nucleotide biosynthesis pathway. This Alkaliphilus oremlandii (strain OhILAs) (Clostridium oremlandii (strain OhILAs)) protein is Aspartate carbamoyltransferase catalytic subunit.